The chain runs to 148 residues: Truncated transcription factor CAULIFLOWER D (148 aa).

The MADS-box domain maps to 1–61 (MGRGRVEMKR…GKLFEYSSES (61 aa)). In terms of domain architecture, K-box; partial spans 90–148 (QTNWSMEYSRLKAKIELWERNQRHYLGEDLESISIKELQNLEQQLDTSLKHIRSRKVCK).

Homodimer capable of binding to CArG-box sequences.

Its subcellular location is the nucleus. Probable transcription factor that promotes early floral meristem identity in synergy with APETALA1, FRUITFULL and LEAFY. Is required subsequently for the transition of an inflorescence meristem into a floral meristem. Seems to be partially redundant to the function of APETALA1. The sequence is that of Truncated transcription factor CAULIFLOWER D (CAL-D) from Brassica oleracea var. botrytis (Cauliflower).